Here is a 276-residue protein sequence, read N- to C-terminus: 3-methyl-2-oxobutanoate hydroxymethyltransferase (276 aa).

Asp49 and Asp88 together coordinate Mg(2+). 3-methyl-2-oxobutanoate is bound by residues 49-50 (DS), Asp88, and Lys118. Position 120 (Glu120) interacts with Mg(2+). Glu187 acts as the Proton acceptor in catalysis.

The protein belongs to the PanB family. Homodecamer; pentamer of dimers. The cofactor is Mg(2+).

Its subcellular location is the cytoplasm. The catalysed reaction is 3-methyl-2-oxobutanoate + (6R)-5,10-methylene-5,6,7,8-tetrahydrofolate + H2O = 2-dehydropantoate + (6S)-5,6,7,8-tetrahydrofolate. It participates in cofactor biosynthesis; (R)-pantothenate biosynthesis; (R)-pantoate from 3-methyl-2-oxobutanoate: step 1/2. Catalyzes the reversible reaction in which hydroxymethyl group from 5,10-methylenetetrahydrofolate is transferred onto alpha-ketoisovalerate to form ketopantoate. This Afipia carboxidovorans (strain ATCC 49405 / DSM 1227 / KCTC 32145 / OM5) (Oligotropha carboxidovorans) protein is 3-methyl-2-oxobutanoate hydroxymethyltransferase.